Here is a 271-residue protein sequence, read N- to C-terminus: Putative phosphoenolpyruvate synthase regulatory protein (271 aa).

151–158 contacts ADP; the sequence is GVSRSGKT.

It belongs to the pyruvate, phosphate/water dikinase regulatory protein family. PSRP subfamily.

The enzyme catalyses [pyruvate, water dikinase] + ADP = [pyruvate, water dikinase]-phosphate + AMP + H(+). It carries out the reaction [pyruvate, water dikinase]-phosphate + phosphate + H(+) = [pyruvate, water dikinase] + diphosphate. Functionally, bifunctional serine/threonine kinase and phosphorylase involved in the regulation of the phosphoenolpyruvate synthase (PEPS) by catalyzing its phosphorylation/dephosphorylation. The chain is Putative phosphoenolpyruvate synthase regulatory protein from Paraburkholderia phytofirmans (strain DSM 17436 / LMG 22146 / PsJN) (Burkholderia phytofirmans).